Here is a 478-residue protein sequence, read N- to C-terminus: Hemolysin secretion protein D, chromosomal (478 aa).

Over 1-59 the chain is Cytoplasmic; sequence MKTWLMGFSEFLLRYKLVWSETWKIRKQLDTPVREKDENEFLPAHLELIETPVSRRPRL. The helical; Signal-anchor for type II membrane protein transmembrane segment at 60-80 threads the bilayer; the sequence is VAYFIMGFLVIAFILSVLGQV. Residues 81–478 lie on the Periplasmic side of the membrane; the sequence is EIVATANGKL…ESVTESLHER (398 aa).

This sequence belongs to the membrane fusion protein (MFP) (TC 8.A.1) family.

Its subcellular location is the cell inner membrane. Involved in the transport of hemolysin A. This chain is Hemolysin secretion protein D, chromosomal (hlyD), found in Escherichia coli.